The following is a 137-amino-acid chain: MIKNIGVDQIEVDRIAKVVDRGDGFARKVLTDREFAQYQDLTHKRKIEYLGGRFAIKEAFSKAWGTGIGQAVSFEDVETLRTESGAPVTTSRIFTGRIFSSIAHDDHEIVAVVVLEEPAGWRRAIGKLSHLLSGRKK.

2 residues coordinate Mg(2+): Asp-8 and Glu-58.

Belongs to the P-Pant transferase superfamily. AcpS family. The cofactor is Mg(2+).

It is found in the cytoplasm. The catalysed reaction is apo-[ACP] + CoA = holo-[ACP] + adenosine 3',5'-bisphosphate + H(+). Transfers the 4'-phosphopantetheine moiety from coenzyme A to a Ser of acyl-carrier-protein. In Lactobacillus delbrueckii subsp. bulgaricus (strain ATCC BAA-365 / Lb-18), this protein is Holo-[acyl-carrier-protein] synthase.